A 188-amino-acid chain; its full sequence is Acireductone dioxygenase (188 aa).

Fe(2+) is bound by residues histidine 97, histidine 99, glutamate 103, and histidine 141. Histidine 97, histidine 99, glutamate 103, and histidine 141 together coordinate Ni(2+).

The protein belongs to the acireductone dioxygenase (ARD) family. In terms of assembly, monomer. The cofactor is Fe(2+). Requires Ni(2+) as cofactor.

The enzyme catalyses 1,2-dihydroxy-5-(methylsulfanyl)pent-1-en-3-one + O2 = 3-(methylsulfanyl)propanoate + CO + formate + 2 H(+). The catalysed reaction is 1,2-dihydroxy-5-(methylsulfanyl)pent-1-en-3-one + O2 = 4-methylsulfanyl-2-oxobutanoate + formate + 2 H(+). The protein operates within amino-acid biosynthesis; L-methionine biosynthesis via salvage pathway; L-methionine from S-methyl-5-thio-alpha-D-ribose 1-phosphate: step 5/6. Catalyzes 2 different reactions between oxygen and the acireductone 1,2-dihydroxy-3-keto-5-methylthiopentene (DHK-MTPene) depending upon the metal bound in the active site. Fe-containing acireductone dioxygenase (Fe-ARD) produces formate and 2-keto-4-methylthiobutyrate (KMTB), the alpha-ketoacid precursor of methionine in the methionine recycle pathway. Ni-containing acireductone dioxygenase (Ni-ARD) produces methylthiopropionate, carbon monoxide and formate, and does not lie on the methionine recycle pathway. The sequence is that of Acireductone dioxygenase from Xylella fastidiosa (strain M12).